The following is a 215-amino-acid chain: Small ribosomal subunit protein uS5 (215 aa).

Positions 1 to 11 (MTDSSPQSNPN) are enriched in polar residues. Residues 1–61 (MTDSSPQSNP…GQDRDSEWQE (61 aa)) form a disordered region. Low complexity predominate over residues 12–28 (AVPGAADVPAAAQGQQQ). The span at 39 to 61 (RGDRRGDRRGGRRGQDRDSEWQE) shows a compositional bias: basic and acidic residues. Residues 59–122 (WQERVVQIRR…ADGKKHLVKV (64 aa)) enclose the S5 DRBM domain.

The protein belongs to the universal ribosomal protein uS5 family. As to quaternary structure, part of the 30S ribosomal subunit. Contacts proteins S4 and S8.

In terms of biological role, with S4 and S12 plays an important role in translational accuracy. Functionally, located at the back of the 30S subunit body where it stabilizes the conformation of the head with respect to the body. This chain is Small ribosomal subunit protein uS5, found in Synechococcus sp. (strain CC9902).